Reading from the N-terminus, the 173-residue chain is ATP-dependent protease subunit HslV (173 aa).

Threonine 2 is an active-site residue. The Na(+) site is built by glycine 158, aspartate 161, and serine 164.

Belongs to the peptidase T1B family. HslV subfamily. As to quaternary structure, a double ring-shaped homohexamer of HslV is capped on each side by a ring-shaped HslU homohexamer. The assembly of the HslU/HslV complex is dependent on binding of ATP.

It is found in the cytoplasm. It catalyses the reaction ATP-dependent cleavage of peptide bonds with broad specificity.. With respect to regulation, allosterically activated by HslU binding. Its function is as follows. Protease subunit of a proteasome-like degradation complex believed to be a general protein degrading machinery. This chain is ATP-dependent protease subunit HslV, found in Actinobacillus pleuropneumoniae serotype 5b (strain L20).